The chain runs to 187 residues: UPF0301 protein VV2869 (187 aa).

This sequence belongs to the UPF0301 (AlgH) family.

This chain is UPF0301 protein VV2869, found in Vibrio vulnificus (strain YJ016).